The chain runs to 163 residues: Deoxyuridine 5'-triphosphate nucleotidohydrolase (163 aa).

Substrate-binding positions include 78–80 (RSG), Asn91, and 95–97 (TVD). The segment covering 140-151 (ERESLNETERGD) has biased composition (basic and acidic residues). The disordered stretch occupies residues 140 to 163 (ERESLNETERGDGGFGHTGVNSQP).

This sequence belongs to the dUTPase family. Requires Mg(2+) as cofactor.

The enzyme catalyses dUTP + H2O = dUMP + diphosphate + H(+). Its pathway is pyrimidine metabolism; dUMP biosynthesis; dUMP from dCTP (dUTP route): step 2/2. In terms of biological role, this enzyme is involved in nucleotide metabolism: it produces dUMP, the immediate precursor of thymidine nucleotides and it decreases the intracellular concentration of dUTP so that uracil cannot be incorporated into DNA. The polypeptide is Deoxyuridine 5'-triphosphate nucleotidohydrolase (Heliobacterium modesticaldum (strain ATCC 51547 / Ice1)).